A 243-amino-acid chain; its full sequence is Triosephosphate isomerase (243 aa).

Residue 9–11 (NWK) participates in substrate binding. Histidine 96 serves as the catalytic Electrophile. The active-site Proton acceptor is glutamate 165. Residues glycine 171, serine 204, and 225 to 226 (GG) contribute to the substrate site.

The protein belongs to the triosephosphate isomerase family. In terms of assembly, homodimer.

It localises to the cytoplasm. The catalysed reaction is D-glyceraldehyde 3-phosphate = dihydroxyacetone phosphate. The protein operates within carbohydrate biosynthesis; gluconeogenesis. Its pathway is carbohydrate degradation; glycolysis; D-glyceraldehyde 3-phosphate from glycerone phosphate: step 1/1. Its function is as follows. Involved in the gluconeogenesis. Catalyzes stereospecifically the conversion of dihydroxyacetone phosphate (DHAP) to D-glyceraldehyde-3-phosphate (G3P). The sequence is that of Triosephosphate isomerase from Prochlorococcus marinus (strain MIT 9313).